Reading from the N-terminus, the 837-residue chain is Zinc fingers and homeoboxes protein 2 (837 aa).

The interval 1–41 (MASKRKSTTPCMVRTSQVVEQDVPEEVDRAKEKGIGTPQPD) is disordered. Residues 27 to 77 (VDRAKEKGIGTPQPDVAKDCWAAELENSSKENEVIEVKSMGESQSKKLQGG) form an interaction with EFNB1 region. Thr37 carries the post-translational modification Phosphothreonine. Lys64 participates in a covalent cross-link: Glycyl lysine isopeptide (Lys-Gly) (interchain with G-Cter in SUMO2). 2 C2H2-type zinc fingers span residues 78–101 (YECKYCPYSTQNLNEFTEHVDMQH) and 110–133 (YVCAECNFTTKKYDSLSDHNSKFH). The segment covering 167–180 (TSGPGTGDSDSGIS) has biased composition (low complexity). Positions 167–203 (TSGPGTGDSDSGISVSKTPIMKPGKPKADAKKVPKKP) are disordered. The segment covering 192–203 (PKADAKKVPKKP) has biased composition (basic and acidic residues). Positions 195–358 (DAKKVPKKPE…PAQLAPTKVT (164 aa)) are required for homodimerization. 4 DNA-binding regions (homeobox) span residues 263–324 (NTTK…WSPE), 439–501 (TPAS…IVHI), 530–591 (PQKF…EQAV), and 628–690 (SPSP…TVKW). Residues 263–446 (NTTKYNSALD…PLTPASDRKK (184 aa)) are required for repressor activity. A required for interaction with NFYA region spans residues 263–497 (NTTKYNSALD…SDHRYRCQRG (235 aa)). The tract at residues 317–446 (HGISWSPEEV…PLTPASDRKK (130 aa)) is required for nuclear localization. Residues 404-445 (GQKRPLVTPQAAPEPKRPHIAQVPEPPPKVANPPLTPASDRK) form a disordered region. Positions 427-439 (PEPPPKVANPPLT) are enriched in pro residues. Lys455 participates in a covalent cross-link: Glycyl lysine isopeptide (Lys-Gly) (interchain with G-Cter in SUMO2). The segment at 754 to 837 (EPAKDCLPAK…DCVPAEAGQA (84 aa)) is disordered. Phosphoserine occurs at positions 825 and 827.

This sequence belongs to the ZHX family. Homodimer (via homeobox domain 1). Heterodimer with ZHX1 (via homeobox domain 1). Heterodimer with ZHX3 (via homeobox domain 1). Heterodimerization with ZHX1 is not necessary for repressor activity. Interacts (via homeobox domain) with NFYA (via N-terminus). Interacts with EFNB1 intracellular domain peptide; the interaction enhances ZHX2 transcriptional repression activity.

The protein resides in the nucleus. Its function is as follows. Acts as a transcriptional repressor. Represses the promoter activity of the CDC25C gene stimulated by NFYA. May play a role in retinal development where it regulates the composition of bipolar cell populations, by promoting differentiation of bipolar OFF-type cells. In the brain, may promote maintenance and suppress differentiation of neural progenitor cells in the developing cortex. This is Zinc fingers and homeoboxes protein 2 (ZHX2) from Pongo abelii (Sumatran orangutan).